The sequence spans 941 residues: Peroxisomal ATPase PEX6 (941 aa).

ATP-binding positions include 384 to 391 (GIPGCGKR) and 698 to 705 (GPPGTGKT).

Belongs to the AAA ATPase family. In terms of assembly, interacts with PEX1; forming the PEX1-PEX6 AAA ATPase complex, which is composed of a heterohexamer formed by a trimer of PEX1-PEX6 dimers. Interacts with APME9.

The protein resides in the cytoplasm. Its subcellular location is the cytosol. It localises to the peroxisome membrane. It carries out the reaction ATP + H2O = ADP + phosphate + H(+). Component of the PEX1-PEX6 AAA ATPase complex, a protein dislocase complex that mediates the ATP-dependent extraction of the PEX5 receptor from peroxisomal membranes, an essential step for PEX5 recycling. Specifically recognizes PEX5 monoubiquitinated at 'Cys-11', and pulls it out of the peroxisome lumen through the PEX2-PEX10-PEX12 retrotranslocation channel. Extraction by the PEX1-PEX6 AAA ATPase complex is accompanied by unfolding of the TPR repeats and release of bound cargo from PEX5. Required for jasmonate biosynthesis. Necessary for the developmental elimination of obsolete peroxisome matix proteins. This chain is Peroxisomal ATPase PEX6, found in Arabidopsis thaliana (Mouse-ear cress).